A 214-amino-acid chain; its full sequence is Cytochrome b (214 aa).

4 helical membrane-spanning segments follow: residues phenylalanine 31–isoleucine 51, tryptophan 75–isoleucine 96, tryptophan 111–leucine 131, and phenylalanine 176–leucine 196. Residues histidine 81 and histidine 95 each coordinate heme b. The heme b site is built by histidine 180 and histidine 194. Histidine 199 contributes to the a ubiquinone binding site.

Belongs to the cytochrome b family. As to quaternary structure, the cytochrome bc1 complex contains 3 respiratory subunits (MT-CYB, CYC1 and UQCRFS1), 2 core proteins (UQCRC1 and UQCRC2) and probably 6 low-molecular weight proteins. Heme b is required as a cofactor.

The protein localises to the mitochondrion inner membrane. Component of the ubiquinol-cytochrome c reductase complex (complex III or cytochrome b-c1 complex) that is part of the mitochondrial respiratory chain. The b-c1 complex mediates electron transfer from ubiquinol to cytochrome c. Contributes to the generation of a proton gradient across the mitochondrial membrane that is then used for ATP synthesis. This chain is Cytochrome b (MT-CYB), found in Crotalus atrox (Western diamondback rattlesnake).